A 570-amino-acid chain; its full sequence is Phosphocholine hydrolase Lem3 (570 aa).

The protein resides in the secreted. It localises to the host cytoplasm. The enzyme catalyses [Rab1 protein]-O-phosphocholine-L-serine + H2O = [Rab1 protein]-L-serine + phosphocholine + H(+). Virulence effector that plays a role in hijacking the host vesicular trafficking by recruiting the small guanosine triphosphatase (GTPase) Rab1 to the cytosolic face of the Legionella-containing vacuole (LCVs). Acts as a phosphocholine hydrolase by mediating the hydrolysis of phosphocholine to Ser residues of host RAB1 (RAB1A, RAB1B or RAB1C). Dephosphocholination of target proteins restores accessibility to GTPase effector LepB. Can act on both GDP-bound and GTP-bound Rab proteins. This Legionella pneumophila subsp. pneumophila (strain Philadelphia 1 / ATCC 33152 / DSM 7513) protein is Phosphocholine hydrolase Lem3 (lem3).